A 101-amino-acid polypeptide reads, in one-letter code: Co-chaperonin GroES 1 (101 aa).

It belongs to the GroES chaperonin family. In terms of assembly, heptamer of 7 subunits arranged in a ring. Interacts with the chaperonin GroEL.

It is found in the cytoplasm. Its function is as follows. Together with the chaperonin GroEL, plays an essential role in assisting protein folding. The GroEL-GroES system forms a nano-cage that allows encapsulation of the non-native substrate proteins and provides a physical environment optimized to promote and accelerate protein folding. GroES binds to the apical surface of the GroEL ring, thereby capping the opening of the GroEL channel. This Rhodopirellula baltica (strain DSM 10527 / NCIMB 13988 / SH1) protein is Co-chaperonin GroES 1.